The primary structure comprises 43 residues: Ferritin light chain (43 aa).

Residues 1-43 enclose the Ferritin-like diiron domain; that stretch reads MEAALLVEKNLNQALLDLHGLASARGDPHICDFLENHFLDEEV.

The protein belongs to the ferritin family. Oligomer of 24 subunits. There are two types of subunits: L (light) chain and H (heavy) chain. The major chain can be light or heavy, depending on the species and tissue type. The functional molecule forms a roughly spherical shell with a diameter of 12 nm and contains a central cavity into which the insoluble mineral iron core is deposited. Interacts with NCOA4.

Its subcellular location is the cytoplasmic vesicle. The protein resides in the autophagosome. The protein localises to the cytoplasm. It is found in the autolysosome. Functionally, stores iron in a soluble, non-toxic, readily available form. Important for iron homeostasis. Iron is taken up in the ferrous form and deposited as ferric hydroxides after oxidation. Also plays a role in delivery of iron to cells. Mediates iron uptake in capsule cells of the developing kidney. Delivery to lysosomes by the cargo receptor NCOA4 for autophagic degradation and release or iron. The sequence is that of Ferritin light chain (FTL) from Ovis aries (Sheep).